The sequence spans 175 residues: Cell number regulator 9 (175 aa).

A run of 2 helical transmembrane segments spans residues 53–73 and 80–100; these read GLCC…AEIV and CGVA…HWIY.

It belongs to the cornifelin family. As to expression, expressed in roots, coleoptiles, leaves and stalks.

The protein localises to the membrane. The sequence is that of Cell number regulator 9 (CNR9) from Zea mays (Maize).